The following is a 326-amino-acid chain: tRNA-modifying protein YgfZ (326 aa).

Residues tryptophan 27 and tryptophan 189 each contribute to the folate site.

The protein belongs to the tRNA-modifying YgfZ family.

It is found in the cytoplasm. Its function is as follows. Folate-binding protein involved in regulating the level of ATP-DnaA and in the modification of some tRNAs. It is probably a key factor in regulatory networks that act via tRNA modification, such as initiation of chromosomal replication. The protein is tRNA-modifying protein YgfZ of Salmonella paratyphi A (strain AKU_12601).